Here is a 397-residue protein sequence, read N- to C-terminus: Enoyl-[acyl-carrier-protein] reductase [NADH] (397 aa).

NAD(+)-binding positions include 48–53, 74–75, 111–112, and 139–140; these read GASTGY, FE, DA, and VA. Tyr225 lines the substrate pocket. The active-site Proton donor is the Tyr235. NAD(+) is bound by residues Lys244 and 273 to 275; that span reads VVT.

Belongs to the TER reductase family. As to quaternary structure, monomer.

It catalyses the reaction a 2,3-saturated acyl-[ACP] + NAD(+) = a (2E)-enoyl-[ACP] + NADH + H(+). Its pathway is lipid metabolism; fatty acid biosynthesis. Involved in the final reduction of the elongation cycle of fatty acid synthesis (FAS II). Catalyzes the reduction of a carbon-carbon double bond in an enoyl moiety that is covalently linked to an acyl carrier protein (ACP). This is Enoyl-[acyl-carrier-protein] reductase [NADH] from Burkholderia mallei (strain SAVP1).